A 250-amino-acid polypeptide reads, in one-letter code: Pyridoxine 5'-phosphate synthase (250 aa).

Asn-8 and Arg-19 together coordinate 3-amino-2-oxopropyl phosphate. His-44 acts as the Proton acceptor in catalysis. 1-deoxy-D-xylulose 5-phosphate is bound by residues Arg-46 and His-51. Glu-76 acts as the Proton acceptor in catalysis. Residue Thr-106 coordinates 1-deoxy-D-xylulose 5-phosphate. His-200 functions as the Proton donor in the catalytic mechanism. 3-amino-2-oxopropyl phosphate is bound by residues Asp-201 and Gly-223–His-224.

The protein belongs to the PNP synthase family. As to quaternary structure, homooctamer; tetramer of dimers.

It localises to the cytoplasm. The enzyme catalyses 3-amino-2-oxopropyl phosphate + 1-deoxy-D-xylulose 5-phosphate = pyridoxine 5'-phosphate + phosphate + 2 H2O + H(+). It functions in the pathway cofactor biosynthesis; pyridoxine 5'-phosphate biosynthesis; pyridoxine 5'-phosphate from D-erythrose 4-phosphate: step 5/5. In terms of biological role, catalyzes the complicated ring closure reaction between the two acyclic compounds 1-deoxy-D-xylulose-5-phosphate (DXP) and 3-amino-2-oxopropyl phosphate (1-amino-acetone-3-phosphate or AAP) to form pyridoxine 5'-phosphate (PNP) and inorganic phosphate. The polypeptide is Pyridoxine 5'-phosphate synthase (Allorhizobium ampelinum (strain ATCC BAA-846 / DSM 112012 / S4) (Agrobacterium vitis (strain S4))).